Here is a 202-residue protein sequence, read N- to C-terminus: Large ribosomal subunit protein bL25 (202 aa).

It belongs to the bacterial ribosomal protein bL25 family. CTC subfamily. Part of the 50S ribosomal subunit; part of the 5S rRNA/L5/L18/L25 subcomplex. Contacts the 5S rRNA. Binds to the 5S rRNA independently of L5 and L18.

In terms of biological role, this is one of the proteins that binds to the 5S RNA in the ribosome where it forms part of the central protuberance. The protein is Large ribosomal subunit protein bL25 of Clostridium perfringens (strain ATCC 13124 / DSM 756 / JCM 1290 / NCIMB 6125 / NCTC 8237 / Type A).